A 520-amino-acid chain; its full sequence is Beta-2-syntrophin (520 aa).

The disordered stretch occupies residues 45–95; that stretch reads EPPAAAFNGLPNGGGGESLPGSPNRGLGPPSPPAPPRGPAGEASASPPVRR. The span at 63–72 shows a compositional bias: low complexity; it reads LPGSPNRGLG. Pro residues predominate over residues 73–82; the sequence is PPSPPAPPRG. Phosphoserine occurs at positions 75, 90, 109, 191, 202, 213, 373, and 375. Low complexity predominate over residues 83-93; the sequence is PAGEASASPPV. In terms of domain architecture, PDZ spans 95-178; the sequence is RVRVVKQEAG…EVLLEVKFIR (84 aa). PH domains are found at residues 143–280 and 305–417; these read ILSV…TNIM and EVKH…QGCH. The tract at residues 195 to 220 is disordered; it reads WEGASPQSPSFSGSEDSGSPKHQNTT. The span at 197-211 shows a compositional bias: low complexity; sequence GASPQSPSFSGSEDS. The SU domain maps to 464–520; sequence PFERLKMSADDGIRNLYLDFGGPEGELTMDLHSCPKPIVFVLHTFLSAKVTRMGLLV. Residues 498–520 are calmodulin-binding; it reads PKPIVFVLHTFLSAKVTRMGLLV.

This sequence belongs to the syntrophin family. In terms of assembly, monomer and homodimer. Interacts with the dystrophin protein DMD and related protein DTNA; and with the other members of the syntrophin family: SNTA1 and SNTB1. Interacts with the neuroregulin receptor ERBB4. Interacts with PTPRN when phosphorylated, protecting PTPRN from protein cleavage by CAPN1. Dephosphorylation upon insulin stimulation disrupts the interaction with PTPRN and results in the cleavage of PTPRN. Interacts with the sodium channel proteins SCN4A and SCN5A. Interacts with SAST, MAST205, microtubules and microtubule-associated proteins. Interacts with the dystrophin related protein UTRN. Interacts with DTNB. In terms of processing, phosphorylated. Partially dephosphorylated upon insulin stimulation. Ubiquitous. Expressed at high levels in the testis.

The protein localises to the membrane. Its subcellular location is the cytoplasmic vesicle. It is found in the secretory vesicle membrane. It localises to the cell junction. The protein resides in the cytoplasm. The protein localises to the cytoskeleton. Functionally, adapter protein that binds to and probably organizes the subcellular localization of a variety of membrane proteins. May link various receptors to the actin cytoskeleton and the dystrophin glycoprotein complex. May play a role in the regulation of secretory granules via its interaction with PTPRN. This Mus musculus (Mouse) protein is Beta-2-syntrophin (Sntb2).